We begin with the raw amino-acid sequence, 1087 residues long: MGTPPRTFLILGCFLTGPLLTLCQLPLPTIVPNRNEMVVQLNSNFTLKCSGDSEVSWQYPVTEGSHRIDIRHEENNSGLFVTVLEVGNASAAHTGMYVCYYNHTQVEDGEVEGKDIYIYVPDPDMPFVPSLPEDQFILVEEGDPTVIPCRTSDPSAEVTLVNSLDKPVYAFYDSKQGFVGNFLAGPYTCKTMVKGVEFKSDEFLIYILRATSQLPVEIEALKTVYKTGETIVVTCVVFDNEVVNLQWNYPGKVKEKGLIKLDDIKVPSQKLVYMLTIPDVLVKDTGDYECTARHATKEVKENKKVVITVHDKGFIHLEPQFSPLEAVNLHEVKNFVVDVQAYPAPKMYWLKDNVTLIENLTEIVTSSNRVQETRFQSVLKLIRAKEEDSGTILWLLKNEDEIKRYTFSLLIQVPALILDLMDDHQGSAGRQTVRCLAEGTPLPDVEWLVCKDIKKCSNDTSWTLLTNNISDIHMEAHLDERNMVESQVTFQKVEETLAVRCVARNDLGAVTRELKLVAPTLRSELTVAAAVLVLLVIVIISLIVLVIIWKQKPRYEIRWRVIESISPDGHEYIYVDPMQLPYDSRWEFPRDGLVLGRILGSGAFGKVVEGTAYGLSRSQPVMKVAVKMLKPTARSSEKQALMSELKIMTHLGPHLNIVNLLGACTKSGPIYIITEYCFYGDLVNYLHKNRDNFLSRHPEKPKKDLDIFGMNPADESTRSYVILSFENTGEYMDMKQADTTQYVPMLERKEGSKYSDIQRSVYDRPASYKKKSLSESEVKNLLSDDGSEGLSLLDLLSFTYQVARGMEFLASKNCVHRDLAARNVLLAQGKIVKICDFGLARDIMHDSNYVSKGSTFLPVKWMAPESIFDNLYTTLSDVWSYGILLWEIFSLGGILYPGMMVDSTFYNKIKSGYRMAKPDHATNEVYEIMVKCWNNEPEKRPSFYHLSEIVESLLPGEYKKSYEKIHLDFLKSDHPAVTRMRGDCDNAYIGVTYKNEDKIKDRESGFDEQRLSADSGYITPLPDIDPVSEDELGKRNRHSSQTSEESAIETGSSSSTFIKREDETIEDIDMMDDIGIDSSDLVEDSFL.

Positions 1-23 are cleaved as a signal peptide; that stretch reads MGTPPRTFLILGCFLTGPLLTLC. Over 24–528 the chain is Extracellular; the sequence is QLPLPTIVPN…PTLRSELTVA (505 aa). Ig-like C2-type domains follow at residues 26–104, 116–208, 213–312, 314–411, and 414–517; these read PLPT…YNHT, IYIY…IYIL, QLPV…VHDK, FIHL…SLLI, and PALI…LKLV. 4 N-linked (GlcNAc...) asparagine glycosylation sites follow: N44, N75, N88, and N102. C49 and C99 form a disulfide bridge. Cystine bridges form between C149–C189 and C235–C290. 4 N-linked (GlcNAc...) asparagine glycosylation sites follow: N353, N359, N458, and N468. An intrachain disulfide couples C435 to C501. The helical transmembrane segment at 529–549 threads the bilayer; it reads AAVLVLLVIVIISLIVLVIIW. At 550 to 1087 the chain is on the cytoplasmic side; that stretch reads KQKPRYEIRW…SSDLVEDSFL (538 aa). 2 positions are modified to phosphotyrosine; by autocatalysis: Y572 and Y574. Residues 593–954 form the Protein kinase domain; that stretch reads LVLGRILGSG…HLSEIVESLL (362 aa). Residues 599-607 and K627 contribute to the ATP site; that span reads LGSGAFGKV. Y720, Y731, Y742, Y754, Y762, and Y768 each carry phosphotyrosine; by autocatalysis. D818 functions as the Proton acceptor in the catalytic mechanism. Residues Y849 and Y988 each carry the phosphotyrosine; by autocatalysis modification. Over residues 1000–1011 the composition is skewed to basic and acidic residues; sequence KDRESGFDEQRL. The segment at 1000-1059 is disordered; sequence KDRESGFDEQRLSADSGYITPLPDIDPVSEDELGKRNRHSSQTSEESAIETGSSSSTFIK. At Y1017 the chain carries Phosphotyrosine; by autocatalysis. Polar residues predominate over residues 1039-1057; the sequence is SSQTSEESAIETGSSSSTF.

The protein belongs to the protein kinase superfamily. Tyr protein kinase family. CSF-1/PDGF receptor subfamily. As to quaternary structure, interacts with homodimeric PDGFA, PDGFB and PDGFC, and with heterodimers formed by PDGFA and PDGFB. Monomer in the absence of bound ligand. Interaction with dimeric PDGFA, PDGFB and/or PDGFC leads to receptor dimerization, where both PDGFRA homodimers and heterodimers with PDGFRB are observed. Ubiquitinated, leading to its internalization and degradation. Post-translationally, autophosphorylated on tyrosine residues upon ligand binding. Autophosphorylation occurs in trans, i.e. one subunit of the dimeric receptor phosphorylates tyrosine residues on the other subunit.

Its subcellular location is the cell membrane. It localises to the cell projection. The protein resides in the cilium. The protein localises to the golgi apparatus. It catalyses the reaction L-tyrosyl-[protein] + ATP = O-phospho-L-tyrosyl-[protein] + ADP + H(+). With respect to regulation, present in an inactive conformation in the absence of bound ligand. Binding of PDGFA and/or PDGFB leads to dimerization and activation by autophosphorylation on tyrosine residues. In terms of biological role, tyrosine-protein kinase that acts as a cell-surface receptor for PDGFA, PDGFB and PDGFC and plays an essential role in the regulation of embryonic development, cell proliferation, survival and chemotaxis. Depending on the context, promotes or inhibits cell proliferation and cell migration. Plays an important role in the differentiation of bone marrow-derived mesenchymal stem cells. Required for normal skeleton development. Required for normal development of the gastrointestinal tract. Plays a role in cell migration and chemotaxis in wound healing. Plays a role in platelet activation, secretion of agonists from platelet granules, and in thrombin-induced platelet aggregation. Binding of its cognate ligands - homodimeric PDGFA, homodimeric PDGFB, heterodimers formed by PDGFA and PDGFB or homodimeric PDGFC -leads to the activation of several signaling cascades; the response depends on the nature of the bound ligand and is modulated by the formation of heterodimers between PDGFRA and PDGFRB. Phosphorylates PIK3R1, PLCG1, and PTPN11. Activation of PLCG1 leads to the production of the cellular signaling molecules diacylglycerol and inositol 1,4,5-trisphosphate, mobilization of cytosolic Ca(2+) and the activation of protein kinase C. Phosphorylates PIK3R1, the regulatory subunit of phosphatidylinositol 3-kinase, and thereby mediates activation of the AKT1 signaling pathway. Mediates activation of HRAS and of the MAP kinases MAPK1/ERK2 and/or MAPK3/ERK1. Promotes activation of STAT family members STAT1, STAT3 and STAT5A and/or STAT5B. Receptor signaling is down-regulated by protein phosphatases that dephosphorylate the receptor and its down-stream effectors, and by rapid internalization of the activated receptor. The polypeptide is Platelet-derived growth factor receptor alpha (PDGFRA) (Gallus gallus (Chicken)).